We begin with the raw amino-acid sequence, 110 residues long: NADH-quinone oxidoreductase subunit K (110 aa).

A run of 3 helical transmembrane segments spans residues Val14–Val34, Ile39–Ile59, and Ile70–Ile90.

Belongs to the complex I subunit 4L family. As to quaternary structure, NDH-1 is composed of 14 different subunits. Subunits NuoA, H, J, K, L, M, N constitute the membrane sector of the complex.

The protein localises to the cell inner membrane. It catalyses the reaction a quinone + NADH + 5 H(+)(in) = a quinol + NAD(+) + 4 H(+)(out). Its function is as follows. NDH-1 shuttles electrons from NADH, via FMN and iron-sulfur (Fe-S) centers, to quinones in the respiratory chain. The immediate electron acceptor for the enzyme in this species is believed to be ubiquinone. Couples the redox reaction to proton translocation (for every two electrons transferred, four hydrogen ions are translocated across the cytoplasmic membrane), and thus conserves the redox energy in a proton gradient. The sequence is that of NADH-quinone oxidoreductase subunit K from Hydrogenobaculum sp. (strain Y04AAS1).